The primary structure comprises 90 residues: uncharacterized protein (90 aa).

This is an uncharacterized protein from Bacillus subtilis (strain 168).